The following is a 603-amino-acid chain: HAUS augmin-like complex subunit 3 (603 aa).

An N-acetylserine modification is found at Ser-2. Coiled-coil stretches lie at residues Arg-93 to Met-177, Val-305 to Leu-336, Leu-389 to Leu-426, and Glu-458 to Glu-495.

Belongs to the HAUS3 family. Component of the HAUS augmin-like complex. The complex interacts with the gamma-tubulin ring complex and this interaction is required for spindle assembly. Interacts with EML3 (phosphorylated at 'Thr-881').

Its subcellular location is the cytoplasm. The protein resides in the cytoskeleton. It localises to the microtubule organizing center. The protein localises to the centrosome. It is found in the spindle. Its function is as follows. Contributes to mitotic spindle assembly, maintenance of centrosome integrity and completion of cytokinesis as part of the HAUS augmin-like complex. The sequence is that of HAUS augmin-like complex subunit 3 (HAUS3) from Homo sapiens (Human).